Here is an 852-residue protein sequence, read N- to C-terminus: Ubiquitin carboxyl-terminal hydrolase 4 (852 aa).

The 125-residue stretch at 172–296 (ASGTVLLVDV…WSNAHPDFCV (125 aa)) folds into the Rhodanese domain. Residues 369–393 (RSSSSSSNINERPGSVPPQLSNGST) are disordered. The USP domain maps to 488-849 (VGLVNCGNSC…NAYVLFYHRI (362 aa)). Cys497 (nucleophile) is an active-site residue. Residue His806 is the Proton acceptor of the active site.

This sequence belongs to the peptidase C19 family.

It is found in the cytoplasm. It localises to the late endosome membrane. It catalyses the reaction Thiol-dependent hydrolysis of ester, thioester, amide, peptide and isopeptide bonds formed by the C-terminal Gly of ubiquitin (a 76-residue protein attached to proteins as an intracellular targeting signal).. With respect to regulation, RFU1 is an inhibitor of deubiquitination activity. Functionally, ubiquitin thioesterase that acts at the late endosome/prevacuolar compartment to recover ubiquitin from ubiquitinated membrane proteins en route to the vacuole. Also removes ubiquitin from soluble proteins targeted to proteasomes. Is essential to maintain a normal level of free ubiquitin. Required for promoting coordination of DNA replication and avoids DNA overreplication. The chain is Ubiquitin carboxyl-terminal hydrolase 4 (DOA4) from Eremothecium gossypii (strain ATCC 10895 / CBS 109.51 / FGSC 9923 / NRRL Y-1056) (Yeast).